A 145-amino-acid polypeptide reads, in one-letter code: D-aminoacyl-tRNA deacylase (145 aa).

The Gly-cisPro motif, important for rejection of L-amino acids motif lies at 137 to 138 (GP).

It belongs to the DTD family. In terms of assembly, homodimer.

The protein resides in the cytoplasm. The enzyme catalyses glycyl-tRNA(Ala) + H2O = tRNA(Ala) + glycine + H(+). The catalysed reaction is a D-aminoacyl-tRNA + H2O = a tRNA + a D-alpha-amino acid + H(+). In terms of biological role, an aminoacyl-tRNA editing enzyme that deacylates mischarged D-aminoacyl-tRNAs. Also deacylates mischarged glycyl-tRNA(Ala), protecting cells against glycine mischarging by AlaRS. Acts via tRNA-based rather than protein-based catalysis; rejects L-amino acids rather than detecting D-amino acids in the active site. By recycling D-aminoacyl-tRNA to D-amino acids and free tRNA molecules, this enzyme counteracts the toxicity associated with the formation of D-aminoacyl-tRNA entities in vivo and helps enforce protein L-homochirality. This chain is D-aminoacyl-tRNA deacylase, found in Chromohalobacter salexigens (strain ATCC BAA-138 / DSM 3043 / CIP 106854 / NCIMB 13768 / 1H11).